A 622-amino-acid polypeptide reads, in one-letter code: MGFLVSKGNLLLLLCASIFPAFGHVETRAHAEERLLKKLFSGYNKWSRPVANISDVVLVRFGLSIAQLIDVDEKNQMMTTNVWVKQEWHDYKLRWDPQEYENVTSIRIPSELIWRPDIVLYNNADGDFAVTHLTKAHLFYDGRIKWMPPAIYKSSCSIDVTFFPFDQQNCKMKFGSWTYDKAKIDLVSMHSHVDQLDYWESGEWVIINAVGNYNSKKYECCTEIYPDITYSFIIRRLPLFYTINLIIPCLLISCLTVLVFYLPSECGEKITLCISVLLSLTVFLLLITEIIPSTSLVIPLIGEYLLFTMIFVTLSIIITVFVLNVHHRSPRTHTMPDWVRRVFLDIVPRLLFMKRPSTVKDNCKKLIESMHKLTNSPRLWSETDMEPNFTTSSSPSPQSNEPSPTSSFCAHLEEPAKPMCKSPSGQYSMLHPEPPQVTCSSPKPSCHPLSDTQTTSISKGRSLSVQQMYSPNKTEEGSIRCRSRSIQYCYLQEDSSQTNGHSSASPASQRCHLNEEQPQHKPHQCKCKCRKGEAAGTPTQGSKSHSNKGEHLVLMSPALKLAVEGVHYIADHLRAEDADFSVKEDWKYVAMVIDRIFLWMFIIVCLLGTVGLFLPPWLAGMI.

Positions 1–23 (MGFLVSKGNLLLLLCASIFPAFG) are cleaved as a signal peptide. Over 24-237 (HVETRAHAEE…ITYSFIIRRL (214 aa)) the chain is Extracellular. N52 carries an N-linked (GlcNAc...) asparagine glycan. V71 and E73 together coordinate Ca(2+). An N-linked (GlcNAc...) asparagine glycan is attached at N102. 2 disulfide bridges follow: C156-C170 and C220-C221. A helical membrane pass occupies residues 238 to 262 (PLFYTINLIIPCLLISCLTVLVFYL). C266 is lipidated: S-palmitoyl cysteine. The next 2 membrane-spanning stretches (helical) occupy residues 270–288 (ITLC…LLIT) and 304–325 (YLLF…VLNV). At 326–595 (HHRSPRTHTM…WKYVAMVIDR (270 aa)) the chain is on the cytoplasmic side. Disordered stretches follow at residues 380 to 477 (WSET…TEEG) and 497 to 516 (QTNG…LNEE). Positions 390-407 (TTSSSPSPQSNEPSPTSS) are enriched in low complexity. 2 stretches are compositionally biased toward polar residues: residues 450-472 (SDTQ…YSPN) and 497-508 (QTNGHSSASPAS). The helical transmembrane segment at 596–614 (IFLWMFIIVCLLGTVGLFL) threads the bilayer.

It belongs to the ligand-gated ion channel (TC 1.A.9) family. Acetylcholine receptor (TC 1.A.9.1) subfamily. Alpha-4/CHRNA4 sub-subfamily. Neuronal AChR is composed of two different types of subunits: alpha and beta. CHRNA4 forms heteropentameric neuronal acetylcholine receptors with CHRNB2 and CHRNB4, as well as CHRNA5 and CHRNB3 as accesory subunits. Found in two major stoichiometric forms, LS (low agonist sensitivity): (CHRNA4)3:(CHRNB2)2 and HS (high agonist sensitivity): (CHRNA4)2:(CHRNB2)3, the two stoichiometric forms differ in their unitary conductance, calcium permeability, ACh sensitivity and potentiation by divalent cation. Cells produce predominantly an (CHRNA4)3:(CHRNB2)2 nAChR. The (CHRNA4)2:(CHRNB2)3 expression is selectively up-regulated by nicotine and has lower single channel conductance and calcium permeability. In the striatum, also forms CHRNA4:CHRNA6:CHRNB2 complexes. Also found in the stoichiometric form: (CHRNA4:CHRNB2)2:CHRNB3.

Its subcellular location is the synaptic cell membrane. It localises to the cell membrane. It carries out the reaction Ca(2+)(in) = Ca(2+)(out). The catalysed reaction is K(+)(in) = K(+)(out). The enzyme catalyses Na(+)(in) = Na(+)(out). Its activity is regulated as follows. Activated by a myriad of ligands such as acetylcholine, cytisine, nicotine, choline and epibatidine. Channel potentiation by calcium is stoichiometry-selective, CHRNA4:CHRNB2 nACh receptor is achieved by calcium association with topographically distinct sites framed by anionic residues within the CHRNA4 subunit and between the CHRNA4 and CHRNB2 subunits. nAChR activity is inhibited by the antagonist alpha-conotoxins BuIA, PnIA, GID and MII, small disulfide-constrained peptides from cone snails. In terms of biological role, component of neuronal acetylcholine receptors (nAChRs) that function as pentameric, ligand-gated cation channels with high calcium permeability among other activities. nAChRs are excitatory neurotrasnmitter receptors formed by a collection of nAChR subunits known to mediate synaptic transmission in the nervous system and the neuromuscular junction. Each nAchR subunit confers differential attributes to channel properties, including activation, deactivation and desensitization kinetics, pH sensitivity, cation permeability, and binding to allosteric modulators. CHRNA4 forms heteropentameric neuronal acetylcholine receptors with CHRNB2 and CHRNB4, as well as CHRNA5 and CHRNB3 as accesory subunits. Is the most abundant nAChR subtype expressed in the central nervous system. Found in two major stoichiometric forms,(CHRNA4)3:(CHRNB2)2 and (CHRNA4)2:(CHRNB2)3, the two stoichiometric forms differ in their unitary conductance, calcium permeability, ACh sensitivity and potentiation by divalent cation. Involved in the modulation of calcium-dependent signaling pathways, influences the release of neurotransmitters, including dopamine, glutamate and GABA. In Gallus gallus (Chicken), this protein is Neuronal acetylcholine receptor subunit alpha-4 (CHRNA4).